Reading from the N-terminus, the 440-residue chain is Protein TENP (440 aa).

As to expression, expressed in developing retina and brain, but not in heart, liver or kidney. In brain, located in a narrow strip in the boundary between the ventricular zone (consisting of proliferating cells) and the intermediate zone (consisting of postmitotic, differentiating cells). Expressed in all major regions of the developing brain, including the myelencephalon, the mesencephalon, the telencephalon and the diencephalon. In the developing retina, expression is scattered across the retinal neural epithelium. Expressed in egg white (at protein level). Expressed in the magnum of the oviduct (at protein level).

Functionally, may play a role in the developmental transition from cell proliferation to cell differentiation during neurogenesis. The sequence is that of Protein TENP (TENP) from Gallus gallus (Chicken).